A 95-amino-acid polypeptide reads, in one-letter code: Co-chaperonin GroES (95 aa).

Belongs to the GroES chaperonin family. Heptamer of 7 subunits arranged in a ring. Interacts with the chaperonin GroEL.

It is found in the cytoplasm. Functionally, together with the chaperonin GroEL, plays an essential role in assisting protein folding. The GroEL-GroES system forms a nano-cage that allows encapsulation of the non-native substrate proteins and provides a physical environment optimized to promote and accelerate protein folding. GroES binds to the apical surface of the GroEL ring, thereby capping the opening of the GroEL channel. This chain is Co-chaperonin GroES, found in Zymomonas mobilis subsp. mobilis (strain ATCC 31821 / ZM4 / CP4).